A 97-amino-acid chain; its full sequence is NADH-quinone oxidoreductase subunit K (97 aa).

Transmembrane regions (helical) follow at residues M1 to Y21, I25 to Y45, and V57 to L77.

Belongs to the complex I subunit 4L family. In terms of assembly, NDH-1 is composed of 14 different subunits. Subunits NuoA, H, J, K, L, M, N constitute the membrane sector of the complex.

Its subcellular location is the cell inner membrane. The enzyme catalyses a quinone + NADH + 5 H(+)(in) = a quinol + NAD(+) + 4 H(+)(out). Functionally, NDH-1 shuttles electrons from NADH, via FMN and iron-sulfur (Fe-S) centers, to quinones in the respiratory chain. The immediate electron acceptor for the enzyme in this species is believed to be a menaquinone. Couples the redox reaction to proton translocation (for every two electrons transferred, four hydrogen ions are translocated across the cytoplasmic membrane), and thus conserves the redox energy in a proton gradient. The polypeptide is NADH-quinone oxidoreductase subunit K (Cytophaga hutchinsonii (strain ATCC 33406 / DSM 1761 / CIP 103989 / NBRC 15051 / NCIMB 9469 / D465)).